Reading from the N-terminus, the 151-residue chain is ALK and LTK ligand 2 (151 aa).

Residues 1–25 form the signal peptide; it reads MRVSGRPMLLALLLLLSTVGDRGRA. Intrachain disulfides connect cysteine 112/cysteine 148 and cysteine 126/cysteine 135.

Belongs to the ALKAL family. In terms of assembly, homodimer.

It localises to the secreted. The protein localises to the cell membrane. In terms of biological role, cytokine that acts as a physiological ligand for receptor tyrosine kinases LTK and ALK, leading to their activation. Cytokine-binding is sufficient to activate LTK. In contrast, ALKAL2-driven activation of ALK is coupled with heparin-binding to ALK. Stimulation of ALK signaling is involved in neural development and regulation of energy expenditure. The chain is ALK and LTK ligand 2 from Mus musculus (Mouse).